The following is a 177-amino-acid chain: Large ribosomal subunit protein uL5m (177 aa).

This sequence belongs to the universal ribosomal protein uL5 family.

It localises to the mitochondrion. This chain is Large ribosomal subunit protein uL5m (RPL5), found in Acanthamoeba castellanii (Amoeba).